A 417-amino-acid chain; its full sequence is Mast cell carboxypeptidase A (417 aa).

The first 15 residues, 1–15, serve as a signal peptide directing secretion; the sequence is MRLILPVGLIATTLA. The propeptide at 16–109 is activation peptide; the sequence is IAPVRFDREK…IEKQFDVKED (94 aa). A Peptidase M14 domain is found at 118–412; the sequence is KYNNWEKIVA…LAVKFIAKYI (295 aa). 2 disulfide bridges follow: Cys-173–Cys-186 and Cys-245–Cys-268. Residues His-176 and Glu-179 each coordinate Zn(2+). His-304 lines the Zn(2+) pocket. Residue Glu-378 is the Proton donor/acceptor of the active site.

This sequence belongs to the peptidase M14 family. Zn(2+) serves as cofactor.

The protein resides in the cytoplasmic vesicle. It localises to the secretory vesicle. It catalyses the reaction Release of a C-terminal amino acid, but little or no action with -Asp, -Glu, -Arg, -Lys or -Pro.. The protein is Mast cell carboxypeptidase A (CPA3) of Homo sapiens (Human).